We begin with the raw amino-acid sequence, 281 residues long: Pseudouridine-5'-phosphate glycosidase (281 aa).

Glu-9 (proton donor) is an active-site residue. Residues Lys-69 and Val-89 each coordinate substrate. Mn(2+) is bound at residue Asp-118. Residue 120–122 participates in substrate binding; the sequence is SAD. Lys-139 functions as the Nucleophile in the catalytic mechanism.

It belongs to the pseudouridine-5'-phosphate glycosidase family. Homotrimer. The cofactor is Mn(2+).

It carries out the reaction D-ribose 5-phosphate + uracil = psi-UMP + H2O. Functionally, catalyzes the reversible cleavage of pseudouridine 5'-phosphate (PsiMP) to ribose 5-phosphate and uracil. Functions biologically in the cleavage direction, as part of a pseudouridine degradation pathway. The polypeptide is Pseudouridine-5'-phosphate glycosidase (Thermus thermophilus (strain ATCC BAA-163 / DSM 7039 / HB27)).